We begin with the raw amino-acid sequence, 225 residues long: Protein GrpE (225 aa).

A compositionally biased stretch (polar residues) spans 1–15 (MSGDASTPEQDQNVV). Disordered stretches follow at residues 1 to 48 (MSGD…DRMQ) and 198 to 225 (VSMG…AEEA). The span at 201–225 (GPGPSDPGSAPAEAAAAPDQTAEEA) shows a compositional bias: low complexity.

It belongs to the GrpE family. As to quaternary structure, homodimer.

The protein localises to the cytoplasm. Its function is as follows. Participates actively in the response to hyperosmotic and heat shock by preventing the aggregation of stress-denatured proteins, in association with DnaK and GrpE. It is the nucleotide exchange factor for DnaK and may function as a thermosensor. Unfolded proteins bind initially to DnaJ; upon interaction with the DnaJ-bound protein, DnaK hydrolyzes its bound ATP, resulting in the formation of a stable complex. GrpE releases ADP from DnaK; ATP binding to DnaK triggers the release of the substrate protein, thus completing the reaction cycle. Several rounds of ATP-dependent interactions between DnaJ, DnaK and GrpE are required for fully efficient folding. This chain is Protein GrpE, found in Synechococcus sp. (strain CC9605).